Here is a 149-residue protein sequence, read N- to C-terminus: Protein K7 (149 aa).

The protein belongs to the orthopoxvirus OPG044 family. Interacts with DDX3; this interaction inhibits DDX3 and suppresses DDX3-mediated IFN-beta promoter induction. Interacts with TRAF6 and IRAK2; these interactions suppress TLR-dependent NF-KappaB activation.

The protein localises to the host cytoplasm. In terms of biological role, virulence factor that affects the acute immune response to infection. Bcl-2-like protein which, through its interaction with the DEAD box RNA helicase DDX3X/DDX3, prevents TBK1/IKKepsilon-mediated IRF3 activation. Contributes to virulence by binding to the host TRAF6 and IRAK2 and preventing host NF-kappa-B activation. This chain is Protein K7 (OPG044), found in Cynomys gunnisoni (Gunnison's prairie dog).